Reading from the N-terminus, the 552-residue chain is Kumamolisin (552 aa).

Positions Met-1–Leu-17 are enriched in basic and acidic residues. A disordered region spans residues Met-1–Val-34. Residues Ala-193–Ser-546 form the Peptidase S53 domain. Active-site charge relay system residues include Glu-266, Asp-270, and Ser-466. Asp-504, Ile-505, Gly-522, Gly-524, and Asp-526 together coordinate Ca(2+).

As to quaternary structure, forms monomeric and dimeric crystals. Requires Ca(2+) as cofactor. Autocatalytically processed.

The protein localises to the secreted. It catalyses the reaction The enzyme preferentially hydrolyzes peptides having an Ala or Pro residue at P2 position and prefers such charged amino acid residues as Glu or Arg at the P2' position. In the oxidized insulin B chain, kumamolysin preferentially cleaves between Leu(15) and Tyr(16).. With respect to regulation, inactivated at 22.4 and 37 degrees Celsius, but not at 60 degrees Celsius, by aldehyde-type inhibitors such as acetyl-Ile-Ala-Phe-CHO and acetyl-Ile-Pro-Phe-CHO. Insensitive to the known carboxyl proteinase inhibitors pepstatin, diazoacetyl-DL-norleucine methyl ester (DAN) and 1,2-epoxy-3-(p-nitrophenoxy)propane (EPNP). Not inhibited by Ala-Ala-Phe-chloromethylketone, an inhibitor of the human tripeptidyl-peptidase 1. Thermostable pepstatin-insensitive serine-carboxyl proteinase. Preferentially hydrolyzes synthetic peptides having an Ala or Pro residue at the P2 position and charged amino acids such as Glu or Arg at the P2' position. In vitro, specifically hydrolyzes the Leu-15-Tyr-16 peptide bond in oxidized insulin B-chain. Additional cleavage of oxidized insulin B-chain at Phe-25-Tyr-26 is detected at a considerably lower rate. Can hydrolyze collagen and the chromogenic substrate azocoll. Shows lower activity with albumin and casein. Shows very weak tripeptidyl peptidase activity. The polypeptide is Kumamolisin (Bacillus sp. (strain MN-32)).